The chain runs to 119 residues: Large ribosomal subunit protein bL20 (119 aa).

The protein belongs to the bacterial ribosomal protein bL20 family.

Functionally, binds directly to 23S ribosomal RNA and is necessary for the in vitro assembly process of the 50S ribosomal subunit. It is not involved in the protein synthesizing functions of that subunit. This Acidithiobacillus ferrooxidans (strain ATCC 23270 / DSM 14882 / CIP 104768 / NCIMB 8455) (Ferrobacillus ferrooxidans (strain ATCC 23270)) protein is Large ribosomal subunit protein bL20.